A 345-amino-acid polypeptide reads, in one-letter code: Glycerol-3-phosphate dehydrogenase [NAD(P)+] (345 aa).

4 residues coordinate NADPH: S23, Y24, H44, and K118. The sn-glycerol 3-phosphate site is built by K118, G147, and T149. Position 151 (A151) interacts with NADPH. Residues K203, D256, S266, R267, and N268 each coordinate sn-glycerol 3-phosphate. K203 serves as the catalytic Proton acceptor. Residue R267 coordinates NADPH. NADPH is bound by residues V291 and E293.

It belongs to the NAD-dependent glycerol-3-phosphate dehydrogenase family.

The protein resides in the cytoplasm. The catalysed reaction is sn-glycerol 3-phosphate + NAD(+) = dihydroxyacetone phosphate + NADH + H(+). It carries out the reaction sn-glycerol 3-phosphate + NADP(+) = dihydroxyacetone phosphate + NADPH + H(+). The protein operates within membrane lipid metabolism; glycerophospholipid metabolism. Its function is as follows. Catalyzes the reduction of the glycolytic intermediate dihydroxyacetone phosphate (DHAP) to sn-glycerol 3-phosphate (G3P), the key precursor for phospholipid synthesis. This chain is Glycerol-3-phosphate dehydrogenase [NAD(P)+], found in Vibrio campbellii (strain ATCC BAA-1116).